The chain runs to 539 residues: MRNRGVHRCIISVGSSNAAHVRRCAVSCCTLASANLARRDLTSSSAAHSNSGTFRDGRFDPYNAIIADITSSSTSSPSGAATKGRLKGWTAAIKSNICIRDHPTTCSSAMLQHFKPTFDASAVSLLRQAGTDIRYITNCDEFGMGSNNIHSVHGPVRNPASPRSESGPIWNLEEERVAGGSSGGSAAVVKAGLVRFALGSDTGGSVRLPAAYCGIVGLKPSYGLVSRWGLVSYADSLDTVGVLAKTVEDVSVVHSVLSQNDPHDPTSASQQARAAAATTVETLISALPSSNSSQPLKGLRVGVPKEYFPVELHPRVLPPFRRAVAGLEELGAQVVQITLPSTPSALSAYYIISSAEASSNLARYDGVEYGFHTPSAPGHHAYAATRTTAFGDEVRKRILLGTFALTADAYDNYFLQASRVRAQVQEDFASALRIRNASTKDDKLTARDQEGVDVILHPSAVDTAPTLAAAMQPGEPSAAEYVQDVLTVPASLAGLPALAVPAGAASDDGWPVGVTLVSQWGCDEVLLHVGKHLQTQLGT.

Residues lysine 94 and serine 181 each act as charge relay system in the active site. Serine 205 (acyl-ester intermediate) is an active-site residue.

This sequence belongs to the amidase family. GatA subfamily. Subunit of the heterotrimeric GatCAB amidotransferase (AdT) complex, composed of A, B and C subunits.

The protein localises to the mitochondrion. The enzyme catalyses L-glutamyl-tRNA(Gln) + L-glutamine + ATP + H2O = L-glutaminyl-tRNA(Gln) + L-glutamate + ADP + phosphate + H(+). Functionally, allows the formation of correctly charged Gln-tRNA(Gln) through the transamidation of misacylated Glu-tRNA(Gln) in the mitochondria. The reaction takes place in the presence of glutamine and ATP through an activated gamma-phospho-Glu-tRNA(Gln). The polypeptide is Glutamyl-tRNA(Gln) amidotransferase subunit A, mitochondrial (Mycosarcoma maydis (Corn smut fungus)).